A 234-amino-acid chain; its full sequence is Coiled-coil domain-containing protein 194 (234 aa).

Positions 1 to 42 are cleaved as a signal peptide; the sequence is MAEPGPEPGRAWRVLALCGVAVFLAAAAAGGALVAWNLAASA. Disordered regions lie at residues 44–67 and 187–234; these read RGPR…PGVD and VLEA…RARG. Residues 66–163 are a coiled coil; the sequence is VDDLRRRLAE…TRRLDEALRR (98 aa). Residues 187–196 are compositionally biased toward low complexity; sequence VLEAEMSPQR. Over residues 197-217 the composition is skewed to basic residues; the sequence is RVPRPRPRSGSRPRPSPRSRS.

This Homo sapiens (Human) protein is Coiled-coil domain-containing protein 194.